The chain runs to 223 residues: Alpha-S2-casein (223 aa).

Positions 1–15 are cleaved as a signal peptide; the sequence is MKFFIFTCLLAVALA. Phosphoserine is present on residues Ser23, Ser24, Ser25, Ser72, Ser73, Ser74, Ser77, Ser145, Ser147, Ser151, and Ser159. A repeat spans 77-141; it reads SAEVAPEEIK…AGPFTPTVNR (65 aa). Residues 159–223 constitute a repeat; the sequence is STEVFTKKTK…TNAIPYVRYL (65 aa).

This sequence belongs to the alpha-casein family. As to expression, mammary gland specific. Secreted in milk.

The protein localises to the secreted. In terms of biological role, important role in the capacity of milk to transport calcium phosphate. The chain is Alpha-S2-casein (CSN1S2) from Capra hircus (Goat).